Reading from the N-terminus, the 349-residue chain is Glucose 1-dehydrogenase 1 (349 aa).

Zn(2+) is bound at residue Cys-39. Residue Thr-41 coordinates substrate. Positions 64 and 65 each coordinate Zn(2+). Residues Glu-110 and Glu-146 each contribute to the substrate site. Residue Glu-146 participates in Zn(2+) binding. Residues 178 to 181 (AGPI), 260 to 262 (LGV), and 289 to 291 (SVN) each bind NADP(+). Substrate is bound at residue Asn-291.

It belongs to the zinc-containing alcohol dehydrogenase family. Glucose 1-dehydrogenase subfamily. The cofactor is Zn(2+).

It carries out the reaction D-glucose + NAD(+) = D-glucono-1,5-lactone + NADH + H(+). The enzyme catalyses D-glucose + NADP(+) = D-glucono-1,5-lactone + NADPH + H(+). Its function is as follows. Catalyzes the NAD(P)(+)-dependent oxidation of D-glucose to D-gluconate via gluconolactone. Can utilize both NAD(+) and NADP(+) as electron acceptor. Is involved in the degradation of glucose through a non-phosphorylative variant of the Entner-Doudoroff pathway. This is Glucose 1-dehydrogenase 1 from Caldivirga maquilingensis (strain ATCC 700844 / DSM 13496 / JCM 10307 / IC-167).